Here is a 415-residue protein sequence, read N- to C-terminus: Serine hydroxymethyltransferase (415 aa).

(6S)-5,6,7,8-tetrahydrofolate is bound by residues Leu121 and 125-127 (GHL). The residue at position 229 (Lys229) is an N6-(pyridoxal phosphate)lysine.

The protein belongs to the SHMT family. In terms of assembly, homodimer. The cofactor is pyridoxal 5'-phosphate.

The protein resides in the cytoplasm. It catalyses the reaction (6R)-5,10-methylene-5,6,7,8-tetrahydrofolate + glycine + H2O = (6S)-5,6,7,8-tetrahydrofolate + L-serine. The protein operates within one-carbon metabolism; tetrahydrofolate interconversion. It functions in the pathway amino-acid biosynthesis; glycine biosynthesis; glycine from L-serine: step 1/1. Catalyzes the reversible interconversion of serine and glycine with tetrahydrofolate (THF) serving as the one-carbon carrier. This reaction serves as the major source of one-carbon groups required for the biosynthesis of purines, thymidylate, methionine, and other important biomolecules. Also exhibits THF-independent aldolase activity toward beta-hydroxyamino acids, producing glycine and aldehydes, via a retro-aldol mechanism. The chain is Serine hydroxymethyltransferase from Bordetella petrii (strain ATCC BAA-461 / DSM 12804 / CCUG 43448).